Here is a 175-residue protein sequence, read N- to C-terminus: uncharacterized protein (175 aa).

Residues 1–2 (ME) are Extracellular-facing. A helical transmembrane segment spans residues 3–23 (SIILSIAIFIGVLLGTSVGAG). The Cytoplasmic segment spans residues 24 to 151 (SGSSISPDVD…TGISTTMNAR (128 aa)). Positions 26 to 88 (SSISPDVDAG…DVGAGSGSSI (63 aa)) are disordered. The span at 59 to 78 (FSGSSTSPDVDAGSGSSTSP) shows a compositional bias: polar residues. Residues 152-172 (VAVLITAAILSAPVTAIALLE) traverse the membrane as a helical segment. At 173 to 175 (ARR) the chain is on the extracellular side.

Its subcellular location is the membrane. This is an uncharacterized protein from Saccharomyces cerevisiae (strain ATCC 204508 / S288c) (Baker's yeast).